The chain runs to 438 residues: Probable exopolygalacturonase B (438 aa).

Positions 1–15 (MYLLPLTLFLTAAFG) are cleaved as a signal peptide. 3 N-linked (GlcNAc...) asparagine glycosylation sites follow: Asn118, Asn185, and Asn225. The stretch at 209–248 (TNDVSFDNVYIHAFSTNASSDPANTDGMDSLDVDGVSFTN) is one PbH1 1 repeat. Asp255 functions as the Proton donor in the catalytic mechanism. Cys257 and Cys274 are oxidised to a cystine. 2 N-linked (GlcNAc...) asparagine glycosylation sites follow: Asn263 and Asn275. Residue His278 is part of the active site. PbH1 repeat units follow at residues 295–316 (IENV…RLKA) and 327–348 (INNV…VLDQ). Residues Asn302, Asn329, Asn354, and Asn366 are each glycosylated (N-linked (GlcNAc...) asparagine). A disulfide bridge links Cys392 with Cys398. The PbH1 4 repeat unit spans residues 398-430 (CTNITLSNVNLTSPKGTAEIVCDDIQGGIGVDC). Residues Asn400 and Asn407 are each glycosylated (N-linked (GlcNAc...) asparagine).

This sequence belongs to the glycosyl hydrolase 28 family.

The protein resides in the secreted. It carries out the reaction [(1-&gt;4)-alpha-D-galacturonosyl](n) + H2O = alpha-D-galacturonate + [(1-&gt;4)-alpha-D-galacturonosyl](n-1). Specific in hydrolyzing the terminal glycosidic bond of polygalacturonic acid and oligogalacturonates. The sequence is that of Probable exopolygalacturonase B (pgxB) from Aspergillus niger (strain ATCC MYA-4892 / CBS 513.88 / FGSC A1513).